A 181-amino-acid polypeptide reads, in one-letter code: Bifunctional protein PyrR (181 aa).

Residues 101–113 (VIVVDDVLYTGRT) carry the PRPP-binding motif.

This sequence belongs to the purine/pyrimidine phosphoribosyltransferase family. PyrR subfamily. Homodimer and homohexamer; in equilibrium.

The catalysed reaction is UMP + diphosphate = 5-phospho-alpha-D-ribose 1-diphosphate + uracil. Regulates transcriptional attenuation of the pyrimidine nucleotide (pyr) operon by binding in a uridine-dependent manner to specific sites on pyr mRNA. This disrupts an antiterminator hairpin in the RNA and favors formation of a downstream transcription terminator, leading to a reduced expression of downstream genes. Its function is as follows. Also displays a weak uracil phosphoribosyltransferase activity which is not physiologically significant. This is Bifunctional protein PyrR from Bacillus velezensis (strain DSM 23117 / BGSC 10A6 / LMG 26770 / FZB42) (Bacillus amyloliquefaciens subsp. plantarum).